A 206-amino-acid polypeptide reads, in one-letter code: Large ribosomal subunit protein uL4 (206 aa).

Positions 51 to 96 (LTRAEVKHSTKKPFRQKGTGNARAGMTSTPNRRGGGRAFPNKPDEN) are disordered.

The protein belongs to the universal ribosomal protein uL4 family. In terms of assembly, part of the 50S ribosomal subunit.

One of the primary rRNA binding proteins, this protein initially binds near the 5'-end of the 23S rRNA. It is important during the early stages of 50S assembly. It makes multiple contacts with different domains of the 23S rRNA in the assembled 50S subunit and ribosome. Functionally, forms part of the polypeptide exit tunnel. In Chromobacterium violaceum (strain ATCC 12472 / DSM 30191 / JCM 1249 / CCUG 213 / NBRC 12614 / NCIMB 9131 / NCTC 9757 / MK), this protein is Large ribosomal subunit protein uL4.